A 211-amino-acid polypeptide reads, in one-letter code: Phosphatidylglycerophosphatase C (211 aa).

The Cytoplasmic segment spans residues 1-33 (MATHERRVVFFDLDGTLHQQDMFGSFLRYLLRR). Residues 34–54 (QPLNALLVLPLLPIIAIALLI) form a helical membrane-spanning segment. Topologically, residues 55-211 (KGRAARWPMS…TPRGELQQLE (157 aa)) are periplasmic.

Mg(2+) is required as a cofactor.

The protein localises to the cell inner membrane. The catalysed reaction is a 1,2-diacyl-sn-glycero-3-phospho-(1'-sn-glycero-3'-phosphate) + H2O = a 1,2-diacyl-sn-glycero-3-phospho-(1'-sn-glycerol) + phosphate. It functions in the pathway phospholipid metabolism; phosphatidylglycerol biosynthesis; phosphatidylglycerol from CDP-diacylglycerol: step 2/2. Its function is as follows. Lipid phosphatase which dephosphorylates phosphatidylglycerophosphate (PGP) to phosphatidylglycerol (PG). The polypeptide is Phosphatidylglycerophosphatase C (pgpC) (Escherichia coli (strain K12)).